A 341-amino-acid polypeptide reads, in one-letter code: L-threonine 3-dehydrogenase (341 aa).

A Zn(2+)-binding site is contributed by cysteine 38. Active-site charge relay system residues include threonine 40 and histidine 43. Positions 63, 64, 93, 96, 99, and 107 each coordinate Zn(2+). Residues isoleucine 175, aspartate 195, arginine 200, 262–264 (LGI), and 286–287 (IY) contribute to the NAD(+) site.

Belongs to the zinc-containing alcohol dehydrogenase family. As to quaternary structure, homotetramer. Requires Zn(2+) as cofactor.

The protein resides in the cytoplasm. It carries out the reaction L-threonine + NAD(+) = (2S)-2-amino-3-oxobutanoate + NADH + H(+). It participates in amino-acid degradation; L-threonine degradation via oxydo-reductase pathway; glycine from L-threonine: step 1/2. In terms of biological role, catalyzes the NAD(+)-dependent oxidation of L-threonine to 2-amino-3-ketobutyrate. In Edwardsiella ictaluri (strain 93-146), this protein is L-threonine 3-dehydrogenase.